We begin with the raw amino-acid sequence, 334 residues long: Phosphate acyltransferase (334 aa).

It belongs to the PlsX family. As to quaternary structure, homodimer. Probably interacts with PlsY.

It is found in the cytoplasm. The enzyme catalyses a fatty acyl-[ACP] + phosphate = an acyl phosphate + holo-[ACP]. The protein operates within lipid metabolism; phospholipid metabolism. In terms of biological role, catalyzes the reversible formation of acyl-phosphate (acyl-PO(4)) from acyl-[acyl-carrier-protein] (acyl-ACP). This enzyme utilizes acyl-ACP as fatty acyl donor, but not acyl-CoA. This Streptococcus thermophilus (strain ATCC BAA-491 / LMD-9) protein is Phosphate acyltransferase.